The chain runs to 69 residues: uncharacterized protein (69 aa).

The signal sequence occupies residues 1–21 (MELLIPLSLLGLYLFSGTRDS). Residue Asn41 is glycosylated (N-linked (GlcNAc...) asparagine).

The protein localises to the secreted. This is an uncharacterized protein from Dictyostelium discoideum (Social amoeba).